Reading from the N-terminus, the 363-residue chain is Chorismate synthase (363 aa).

The tract at residues 44–63 (DLDRRKPGTSRHTTQRQEPD) is disordered. Residues Arg48 and Arg54 each contribute to the NADP(+) site. FMN is bound by residues 125-127 (RSS), 237-238 (NA), Gly277, 292-296 (KPTSS), and Arg318.

This sequence belongs to the chorismate synthase family. Homotetramer. It depends on FMNH2 as a cofactor.

It catalyses the reaction 5-O-(1-carboxyvinyl)-3-phosphoshikimate = chorismate + phosphate. It participates in metabolic intermediate biosynthesis; chorismate biosynthesis; chorismate from D-erythrose 4-phosphate and phosphoenolpyruvate: step 7/7. Its function is as follows. Catalyzes the anti-1,4-elimination of the C-3 phosphate and the C-6 proR hydrogen from 5-enolpyruvylshikimate-3-phosphate (EPSP) to yield chorismate, which is the branch point compound that serves as the starting substrate for the three terminal pathways of aromatic amino acid biosynthesis. This reaction introduces a second double bond into the aromatic ring system. The chain is Chorismate synthase from Pseudomonas fluorescens (strain ATCC BAA-477 / NRRL B-23932 / Pf-5).